The following is a 59-amino-acid chain: Putative antitoxin AF_1090 (59 aa).

The protein belongs to the UPF0165 family.

Possibly the antitoxin component of a type II toxin-antitoxin (TA) system. The polypeptide is Putative antitoxin AF_1090 (Archaeoglobus fulgidus (strain ATCC 49558 / DSM 4304 / JCM 9628 / NBRC 100126 / VC-16)).